A 373-amino-acid chain; its full sequence is Lipoyl amidotransferase LIPT1, mitochondrial (373 aa).

The transit peptide at 1–25 (MLIPFSMKNCFQLLCNLKVPAAGFK) directs the protein to the mitochondrion. The BPL/LPL catalytic domain occupies 57 to 243 (LEGKPVLFLW…EYATSHQIDN (187 aa)). Tyr-107, Arg-151, Lys-161, Thr-179, Thr-208, and Ala-210 together coordinate (R)-lipoyl-5'-AMP.

Belongs to the LplA family.

It is found in the mitochondrion. The catalysed reaction is N(6)-[(R)-lipoyl]-L-lysyl-[glycine-cleavage complex H protein] + L-lysyl-[lipoyl-carrier protein] = L-lysyl-[glycine-cleavage complex H protein] + N(6)-[(R)-lipoyl]-L-lysyl-[lipoyl-carrier protein]. The enzyme catalyses (R)-lipoyl-5'-AMP + L-lysyl-[lipoyl-carrier protein] = N(6)-[(R)-lipoyl]-L-lysyl-[lipoyl-carrier protein] + AMP + 2 H(+). It functions in the pathway protein modification; protein lipoylation via exogenous pathway; protein N(6)-(lipoyl)lysine from lipoate: step 2/2. With respect to regulation, inhibited by lipoyl-AMP analogs including hexanoyl-, octanoyl- and decanoyl-AMP. In terms of biological role, lipoyl amidotransferase that catalyzes the transfer of lipoyl moieties from lipoyl-protein H of the glycine cleavage system (lipoyl-GCSH) to E2 subunits of the pyruvate dehydrogenase complex (PDCE2). Unable to catalyze the transfer of octanoyl from octanoyl-GCSH to PDCE2. In vitro, it is also able to catalyze the transfer of the lipoyl group from lipoyl-AMP to the specific lysine residue of lipoyl domains of lipoate-dependent enzymes but this reaction may not be physiologically relevant. The protein is Lipoyl amidotransferase LIPT1, mitochondrial (LIPT1) of Bos taurus (Bovine).